We begin with the raw amino-acid sequence, 96 residues long: Integration host factor subunit beta (96 aa).

The disordered stretch occupies residues 59–78; the sequence is RVGRNPKTGETVSLPGKYVP.

The protein belongs to the bacterial histone-like protein family. Heterodimer of an alpha and a beta chain.

Functionally, this protein is one of the two subunits of integration host factor, a specific DNA-binding protein that functions in genetic recombination as well as in transcriptional and translational control. This chain is Integration host factor subunit beta, found in Thioalkalivibrio sulfidiphilus (strain HL-EbGR7).